Reading from the N-terminus, the 352-residue chain is Heavy metal-associated isoprenylated plant protein 36 (352 aa).

The HMA domain occupies 29–92; the sequence is YTTWVLRVSI…KIMKAGRHAE (64 aa). Residues Cys40 and Cys43 each contribute to the a metal cation site. 3 disordered regions span residues 96 to 150, 162 to 211, and 229 to 252; these read TSME…GNFD, QLQP…GPPE, and PHLH…RHHP. Polar residues predominate over residues 97–107; that stretch reads SMENNINNDCN. The span at 118 to 128 shows a compositional bias: acidic residues; sequence ETSGDEDDDEN. Positions 133–148 are enriched in gly residues; the sequence is NGGGDVGGGGGGGGGN. Residues 172–183 are compositionally biased toward basic residues; that stretch reads KKKKKKKKKKKS. Residues 192–203 are compositionally biased toward gly residues; the sequence is EGGGGGGGGGGP. Cys349 carries the post-translational modification Cysteine methyl ester. Cys349 carries S-farnesyl cysteine lipidation. Positions 350-352 are cleaved as a propeptide — removed in mature form; it reads CVM.

This sequence belongs to the HIPP family.

Heavy-metal-binding protein. The protein is Heavy metal-associated isoprenylated plant protein 36 of Arabidopsis thaliana (Mouse-ear cress).